The sequence spans 247 residues: Ribonuclease 3 (247 aa).

Positions 5–147 (LIALQERLQH…LIGAVYLDAG (143 aa)) constitute an RNase III domain. Glu40 is a binding site for Mg(2+). Residue Asp44 is part of the active site. The tract at residues 104–124 (QRRSRRRCADELQPDEAGSGG) is disordered. Positions 133 and 136 each coordinate Mg(2+). Residue Glu136 is part of the active site. The DRBM domain maps to 174-244 (DAKTALQEWL…AAAMLATLKA (71 aa)).

This sequence belongs to the ribonuclease III family. As to quaternary structure, homodimer. It depends on Mg(2+) as a cofactor.

It is found in the cytoplasm. The enzyme catalyses Endonucleolytic cleavage to 5'-phosphomonoester.. Digests double-stranded RNA. Involved in the processing of primary rRNA transcript to yield the immediate precursors to the large and small rRNAs (23S and 16S). Processes some mRNAs, and tRNAs when they are encoded in the rRNA operon. Processes pre-crRNA and tracrRNA of type II CRISPR loci if present in the organism. The polypeptide is Ribonuclease 3 (Verminephrobacter eiseniae (strain EF01-2)).